A 258-amino-acid chain; its full sequence is Acetylglutamate kinase (258 aa).

Residues 44–45, Arg-66, and Asn-158 contribute to the substrate site; that span reads GG. Residues 181 to 186 and 209 to 211 each bind ATP; these read DVSGIL and IIT.

It belongs to the acetylglutamate kinase family. ArgB subfamily. Homodimer.

The protein resides in the cytoplasm. The enzyme catalyses N-acetyl-L-glutamate + ATP = N-acetyl-L-glutamyl 5-phosphate + ADP. The protein operates within amino-acid biosynthesis; L-arginine biosynthesis; N(2)-acetyl-L-ornithine from L-glutamate: step 2/4. Catalyzes the ATP-dependent phosphorylation of N-acetyl-L-glutamate. This chain is Acetylglutamate kinase, found in Citrobacter koseri (strain ATCC BAA-895 / CDC 4225-83 / SGSC4696).